Consider the following 231-residue polypeptide: 7-cyano-7-deazaguanine synthase (231 aa).

8 to 18 serves as a coordination point for ATP; the sequence is FSGGQDSTTCL. Zn(2+) contacts are provided by cysteine 188, cysteine 197, cysteine 200, and cysteine 203.

This sequence belongs to the QueC family. The cofactor is Zn(2+).

The enzyme catalyses 7-carboxy-7-deazaguanine + NH4(+) + ATP = 7-cyano-7-deazaguanine + ADP + phosphate + H2O + H(+). It participates in purine metabolism; 7-cyano-7-deazaguanine biosynthesis. Catalyzes the ATP-dependent conversion of 7-carboxy-7-deazaguanine (CDG) to 7-cyano-7-deazaguanine (preQ(0)). The protein is 7-cyano-7-deazaguanine synthase of Salmonella schwarzengrund (strain CVM19633).